The primary structure comprises 1468 residues: Histone-lysine N-methyltransferase, H3 lysine-4 specific (1468 aa).

Over residues 1–11 (MPYSSQQNGYT) the composition is skewed to polar residues. Disordered regions lie at residues 1 to 439 (MPYS…RSFG), 636 to 737 (EHKL…EEYD), 848 to 884 (SAPSQHAPSQQIRTPSGKHASVPLSMPAPPKQERKAI), 986 to 1103 (AGAH…TGEE), and 1141 to 1162 (PPEAVVEADQGSETATPETDVP). A compositionally biased stretch (low complexity) spans 12 to 26 (SASTSRLSEQTSSHS). Composition is skewed to basic and acidic residues over residues 28-40 (SSREDRHLTEKGR), 46-89 (EARH…DHWR), 99-109 (PRDDRRDEARN), 120-136 (PEHSTSRLRHRSPESAH), 146-166 (LDSKPDRGGDRKTGEALDSGR), and 174-215 (YEYD…RDDS). Residues 225-235 (RRSRSRSRSRS) show a composition bias toward basic residues. 2 stretches are compositionally biased toward basic and acidic residues: residues 236–287 (RSRD…EHST) and 294–305 (EDSKDLRHESQR). Polar residues-rich tracts occupy residues 306–315 (RVSASVQSAS) and 366–376 (SAPNGSATAPS). Residues 396-405 (PTREKAEEAR) show a composition bias toward basic and acidic residues. Residues 406–416 (TSSTRRPSSQT) are compositionally biased toward low complexity. The span at 417 to 426 (NDNVNNSRDP) shows a compositional bias: polar residues. Composition is skewed to low complexity over residues 650–662 (AAASSSPATPSTT) and 680–694 (PAAPSPSYASSPASA). The segment covering 713–722 (SSYEESRKLA) has biased composition (basic and acidic residues). Residues 849 to 861 (APSQHAPSQQIRT) are compositionally biased toward polar residues. Positions 1012 to 1024 (KKKRGHTHRSKVH) are enriched in basic residues. Over residues 1072-1085 (SDAEAGTDDVDSTE) the composition is skewed to acidic residues. The span at 1086-1097 (TDALSRSVSASV) shows a compositional bias: polar residues. A RxxxRR motif motif is present at residues 1293 to 1298 (RADSRR). Residues 1327–1444 (KQLKFAKSPI…AGEELTYDYK (118 aa)) enclose the SET domain. Tyr-1443 contributes to the S-adenosyl-L-methionine binding site. The Post-SET domain maps to 1453–1468 (DAIPCLCGSPGCRRFL).

The protein belongs to the class V-like SAM-binding methyltransferase superfamily. As to quaternary structure, component of the Set1C/COMPASS complex.

The protein resides in the nucleus. It localises to the chromosome. It catalyses the reaction L-lysyl(4)-[histone H3] + 3 S-adenosyl-L-methionine = N(6),N(6),N(6)-trimethyl-L-lysyl(4)-[histone H3] + 3 S-adenosyl-L-homocysteine + 3 H(+). It carries out the reaction N(6)-methyl-L-lysyl(4)-[histone H3] + S-adenosyl-L-methionine = N(6),N(6)-dimethyl-L-lysyl(4)-[histone H3] + S-adenosyl-L-homocysteine + H(+). The enzyme catalyses N(6),N(6)-dimethyl-L-lysyl(4)-[histone H3] + S-adenosyl-L-methionine = N(6),N(6),N(6)-trimethyl-L-lysyl(4)-[histone H3] + S-adenosyl-L-homocysteine + H(+). Its function is as follows. Catalytic component of the COMPASS (Set1C) complex that specifically mono-, di- and trimethylates histone H3 to form H3K4me1/2/3. Binds RNAs which might negatively affect its histone methyltransferase activity. COMPASS recognizes ubiquitinated H2B on one face of the nucleosome which stimulates the methylation of H3 on the opposing face. The polypeptide is Histone-lysine N-methyltransferase, H3 lysine-4 specific (SET1) (Mycosarcoma maydis (Corn smut fungus)).